A 1085-amino-acid polypeptide reads, in one-letter code: Solute carrier family 12 member 4 (1085 aa).

Topologically, residues 1-119 (MPHFTVVPVD…RRAAKAPSMG (119 aa)) are cytoplasmic. 4 positions are modified to phosphoserine: S24, S47, S81, and S88. The discontinuously helical transmembrane segment at 120–141 (TLMGVYLPCLQNIFGVILFLRL) threads the bilayer. N131 and I132 together coordinate K(+). Residues 142–149 (TWMVGTAG) are Extracellular-facing. Residues 150-172 (VLQALLIVLICCCCTLLTAISMS) form a helical membrane-spanning segment. The Cytoplasmic portion of the chain corresponds to 173–196 (AIATNGVVPAGGSYFMISRSLGPE). A helical transmembrane segment spans residues 197-225 (FGGAVGLCFYLGTTFAAAMYILGAIEILL). Y216 is a K(+) binding site. Residues 226–248 (TYIAPPAAIFYPSGTHDMSSATL) are Extracellular-facing. A run of 2 helical transmembrane segments spans residues 249 to 271 (NNMR…VGVK) and 272 to 297 (YVNK…GGIK). Topologically, residues 298–419 (SIFDPPVFPV…LYVVADIATS (122 aa)) are extracellular. C308 and C323 form a disulfide bridge. Residues N312, N331, and N347 are each glycosylated (N-linked (GlcNAc...) asparagine). A disulfide bridge connects residues C343 and C353. The helical transmembrane segment at 420-440 (FTVLVGIFFPSVTGIMAGSNR) threads the bilayer. K(+) contacts are provided by P429 and T432. Positions 433, 434, and 435 each coordinate chloride. The Cytoplasmic portion of the chain corresponds to 441 to 450 (SGDLRDAQKS). A helical transmembrane segment spans residues 451 to 473 (IPVGTILAIVTTSLVYFSSVILF). Over 474–504 (GACIEGVVLRDKYGDGVSRNLVVGTLAWPSP) the chain is Extracellular. Residues 505–531 (WVIVVGSFFSTCGAGLQSLTGAPRLLQ) traverse the membrane as a helical segment. Topologically, residues 532–554 (AIAKDNIIPFLRVFGHGKANGEP) are cytoplasmic. A run of 2 helical transmembrane segments spans residues 555–575 (TWAL…ASLD) and 576–598 (MVAP…ACAV). Y589 provides a ligand contact to chloride. Residues 599-612 (QTLLRTPNWRPRFK) are Cytoplasmic-facing. The next 2 helical transmembrane spans lie at 613–635 (YYHW…VSSW) and 636–651 (YYAL…IYKY). Over 652 to 1085 (IEYQGAEKEW…GGREVITIYS (434 aa)) the chain is Cytoplasmic. Residues 665–681 (IRGLSLSAARYALLRLE) form a scissor helix region. ATP-binding residues include L697, K699, K707, Y708, and V730. Phosphoserine is present on S734. Residues G794, W795, and Y797 each contribute to the ATP site. A phosphoserine mark is found at S916 and S967. At T983 the chain carries Phosphothreonine. A Phosphoserine modification is found at S1050.

The protein belongs to the SLC12A transporter family. K/Cl co-transporter subfamily. As to quaternary structure, homodimer; adopts a domain-swap conformation at the scissor helices connecting the transmembrane domain and C-terminal domain. Heterodimer with other K-Cl cotransporters. In terms of processing, phosphorylated, phosphorylation may regulate transporter activity. In terms of tissue distribution, detected in embryo, adult heart, erythrocytes, brain, kidney, stomach, ovary, testis and liver.

The protein resides in the cell membrane. The enzyme catalyses K(+)(in) + chloride(in) = K(+)(out) + chloride(out). With respect to regulation, inhibited by WNK3. Functionally, mediates electroneutral potassium-chloride cotransport when activated by cell swelling. May contribute to cell volume homeostasis in single cells. May be involved in the regulation of basolateral Cl(-) exit in NaCl absorbing epithelia. The polypeptide is Solute carrier family 12 member 4 (Slc12a4) (Mus musculus (Mouse)).